Here is a 449-residue protein sequence, read N- to C-terminus: Probable pectate lyase P59 (449 aa).

Residues methionine 1–proline 22 form the signal peptide. N-linked (GlcNAc...) asparagine glycans are attached at residues asparagine 56, asparagine 80, and asparagine 81. Ca(2+) is bound by residues aspartate 245, aspartate 269, and aspartate 273. Arginine 325 is a catalytic residue.

Belongs to the polysaccharide lyase 1 family. Requires Ca(2+) as cofactor. Expressed in anthers and pollen.

The catalysed reaction is Eliminative cleavage of (1-&gt;4)-alpha-D-galacturonan to give oligosaccharides with 4-deoxy-alpha-D-galact-4-enuronosyl groups at their non-reducing ends.. It functions in the pathway glycan metabolism; pectin degradation; 2-dehydro-3-deoxy-D-gluconate from pectin: step 2/5. Functionally, might be needed during pollen development and tube growth. In Solanum lycopersicum (Tomato), this protein is Probable pectate lyase P59 (LAT59).